Consider the following 536-residue polypeptide: MLRQAGTRLLKVPVCGLRPSITLKRGYAEKAAPTEVPSILEERIRGAYNQAQMMESGRVLSIGDGIARISGLSNVQAEELVEFSSGIKGMALNLEADTVGCVLFGNDRLVREGEVVKRTRHIVDVPVGEALLGRVVDALGNPIDGKGPIKTTERRRVQLKAPGILPRTSVCEPMQTGLKAIDSMVPIGRGQRELIIGDRQTGKTAIALDTILNHKRWNNSSDESKKLYCVYVAVGQKRSTVAQLVQKLEENDSLKYSIIVAATASESAPLQYLAPFSGCAMGEWFRDNGKHGLVVYDDLSKQAVAYRQMSLLLRRPPGREAYPGDVFYLHSRLLERAAKMSPKHGGGSLTALPVIETQGGDVSAYIPTNVISITDGQIFLESELFFKGIRPAINVGLSVSRVGSAAQVKAMKQVAGQIKLFLAQYREVASFAQFGSDLDAGTRATLDRGLRLTELLKQPQYSPLAVEEQVPLIYCGVKGYLDKIPVDRVVEFEHKFIPYLRSSGAEIMEAIRKEGVLSKTTEDSLKAVIKEFLSSF.

A mitochondrion-targeting transit peptide spans 1–27 (MLRQAGTRLLKVPVCGLRPSITLKRGY). Residue 197–204 (GDRQTGKT) participates in ATP binding.

The protein belongs to the ATPase alpha/beta chains family. In terms of assembly, F-type ATPases have 2 components, CF(1) - the catalytic core - and CF(0) - the membrane proton channel. CF(1) has five subunits: alpha(3), beta(3), gamma(1), delta(1), epsilon(1). CF(0) has three main subunits: a, b and c.

The protein resides in the mitochondrion. Its subcellular location is the mitochondrion inner membrane. Functionally, mitochondrial membrane ATP synthase (F(1)F(0) ATP synthase or Complex V) produces ATP from ADP in the presence of a proton gradient across the membrane which is generated by electron transport complexes of the respiratory chain. F-type ATPases consist of two structural domains, F(1) - containing the extramembraneous catalytic core, and F(0) - containing the membrane proton channel, linked together by a central stalk and a peripheral stalk. During catalysis, ATP synthesis in the catalytic domain of F(1) is coupled via a rotary mechanism of the central stalk subunits to proton translocation. Subunits alpha and beta form the catalytic core in F(1). Rotation of the central stalk against the surrounding alpha(3)beta(3) subunits leads to hydrolysis of ATP in three separate catalytic sites on the beta subunits. Subunit alpha does not bear the catalytic high-affinity ATP-binding sites. This Schizosaccharomyces pombe (strain 972 / ATCC 24843) (Fission yeast) protein is ATP synthase subunit alpha, mitochondrial (atp1).